A 121-amino-acid chain; its full sequence is Large ribosomal subunit protein uL18 (121 aa).

A compositionally biased stretch (basic residues) spans 1–19 (MASKKVQKIRDKRKARVRA). Residues 1–23 (MASKKVQKIRDKRKARVRAKISG) form a disordered region.

It belongs to the universal ribosomal protein uL18 family. Part of the 50S ribosomal subunit; part of the 5S rRNA/L5/L18/L25 subcomplex. Contacts the 5S and 23S rRNAs.

Functionally, this is one of the proteins that bind and probably mediate the attachment of the 5S RNA into the large ribosomal subunit, where it forms part of the central protuberance. The chain is Large ribosomal subunit protein uL18 from Syntrophus aciditrophicus (strain SB).